The following is a 729-amino-acid chain: Anti-bacteriophage protein B (729 aa).

The Helicase ATP-binding domain occupies 109–271 (FDLLKSGQNV…KLGYPHTFVS (163 aa)). 122–129 (APTSMGKS) contributes to the ATP binding site. Residues 297-472 (ALGEIAHACV…GIDTPINLLA (176 aa)) enclose the Helicase C-terminal domain.

It belongs to the helicase family. As to quaternary structure, interacts with AbpB.

Part of an antiviral system composed of AbpA and AbpB; when both are expressed from a plasmid they confer resistance to phages T2, T4, T7 and lambda but not RB32 or RB69. Resistance is temperature dependent, it can be seen at 30 degrees Celsius but not at 37 or 42 degrees Celsius. The system impairs phage but not bacterial DNA synthesis (shown for T4, T7 and lambda). Partially suppressed by mutations in T4 gene 41, a replicative helicase. Functionally, deletion or mutations in this gene were selected in directed evolution experiments for resistance to intense ionizing radiation (3000 Gy). The protein is Anti-bacteriophage protein B of Escherichia coli (strain K12).